A 172-amino-acid polypeptide reads, in one-letter code: Adenine phosphoribosyltransferase (172 aa).

The protein belongs to the purine/pyrimidine phosphoribosyltransferase family. In terms of assembly, homodimer.

It localises to the cytoplasm. The enzyme catalyses AMP + diphosphate = 5-phospho-alpha-D-ribose 1-diphosphate + adenine. It functions in the pathway purine metabolism; AMP biosynthesis via salvage pathway; AMP from adenine: step 1/1. Its function is as follows. Catalyzes a salvage reaction resulting in the formation of AMP, that is energically less costly than de novo synthesis. The protein is Adenine phosphoribosyltransferase of Exiguobacterium sibiricum (strain DSM 17290 / CCUG 55495 / CIP 109462 / JCM 13490 / 255-15).